The primary structure comprises 255 residues: 5'-nucleotidase SurE (255 aa).

4 residues coordinate a divalent metal cation: Asp-8, Asp-9, Ser-40, and Asn-93.

It belongs to the SurE nucleotidase family. A divalent metal cation serves as cofactor.

It localises to the cytoplasm. It catalyses the reaction a ribonucleoside 5'-phosphate + H2O = a ribonucleoside + phosphate. In terms of biological role, nucleotidase that shows phosphatase activity on nucleoside 5'-monophosphates. The chain is 5'-nucleotidase SurE from Bradyrhizobium sp. (strain ORS 278).